A 226-amino-acid polypeptide reads, in one-letter code: High affinity heme transporter (226 aa).

The first 20 residues, 1 to 20 (MISLKIYFVLIFLFLKGINS), serve as a signal peptide directing secretion. The tract at residues 72–101 (CDTTILSETNNVTGSCYVANCANDTVLEIC) is heme binding. A lipid anchor (GPI-anchor amidated serine) is attached at S199. Positions 200 to 226 (SASSTIFKPSYFISCLLSVGLYLVLNF) are cleaved as a propeptide — removed in mature form.

The protein localises to the cell membrane. It is found in the vacuole membrane. Functionally, high affinity heme transporter involved in the assimilation of exogenous heme during conditions of low cellular iron. In Schizosaccharomyces pombe (strain 972 / ATCC 24843) (Fission yeast), this protein is High affinity heme transporter.